The primary structure comprises 58 residues: Ribosome modulation factor (58 aa).

It belongs to the ribosome modulation factor family.

It is found in the cytoplasm. Its function is as follows. During stationary phase, converts 70S ribosomes to an inactive dimeric form (100S ribosomes). In Tolumonas auensis (strain DSM 9187 / NBRC 110442 / TA 4), this protein is Ribosome modulation factor.